The chain runs to 75 residues: Defense protein 6 (75 aa).

The N-terminal stretch at 1-20 (MKTCLVFAFFLVAVFAAVQA) is a signal peptide. Positions 21–32 (EENDSPQTLPRR) are excised as a propeptide. Intrachain disulfides connect C44–C63, C49–C68, and C53–C70.

This sequence belongs to the invertebrate defensin family.

The protein localises to the secreted. Its function is as follows. Has antibacterial activity. In Lonomia obliqua (Moth), this protein is Defense protein 6.